The sequence spans 798 residues: Phenylalanine--tRNA ligase beta subunit (798 aa).

In terms of domain architecture, tRNA-binding spans I38 to E148. The B5 domain occupies F400–D475. 4 residues coordinate Mg(2+): D453, D459, E462, and E463. In terms of domain architecture, FDX-ACB spans S703 to R796.

It belongs to the phenylalanyl-tRNA synthetase beta subunit family. Type 1 subfamily. As to quaternary structure, tetramer of two alpha and two beta subunits. Mg(2+) serves as cofactor.

The protein localises to the cytoplasm. It carries out the reaction tRNA(Phe) + L-phenylalanine + ATP = L-phenylalanyl-tRNA(Phe) + AMP + diphosphate + H(+). The protein is Phenylalanine--tRNA ligase beta subunit of Carboxydothermus hydrogenoformans (strain ATCC BAA-161 / DSM 6008 / Z-2901).